The chain runs to 116 residues: U16-barytoxin-Tl1c (116 aa).

The first 20 residues, 1 to 20 (MKTIIVFLSLLVLATKFGDA), serve as a signal peptide directing secretion. The propeptide occupies 21-74 (NEGVNQEQMKEVIQNEFREDFLNEMAAMSLLQQLEAIESTLLEKEADRNSRQKR). Disulfide bonds link Cys-75–Cys-90, Cys-82–Cys-95, and Cys-89–Cys-110.

It belongs to the neurotoxin 14 (magi-1) family. 06 (ICK-Trit) subfamily. As to expression, expressed by the venom gland.

Its subcellular location is the secreted. Its function is as follows. Ion channel inhibitor. The polypeptide is U16-barytoxin-Tl1c (Trittame loki (Brush-footed trapdoor spider)).